A 125-amino-acid polypeptide reads, in one-letter code: Large ribosomal subunit protein bL19 (125 aa).

The protein belongs to the bacterial ribosomal protein bL19 family.

Functionally, this protein is located at the 30S-50S ribosomal subunit interface and may play a role in the structure and function of the aminoacyl-tRNA binding site. This is Large ribosomal subunit protein bL19 from Synechococcus sp. (strain JA-2-3B'a(2-13)) (Cyanobacteria bacterium Yellowstone B-Prime).